Here is a 693-residue protein sequence, read N- to C-terminus: Translation factor GUF1 homolog, mitochondrial (693 aa).

Residues 51–63 are compositionally biased toward polar residues; sequence SSSSTEKPTTSGT. The interval 51–78 is disordered; the sequence is SSSSTEKPTTSGTINGGGGKQKAASQPK. The tr-type G domain occupies 88–270; sequence QKIRNFSIIA…RIVQMVPPPP (183 aa). GTP-binding positions include 97-104, 163-167, and 217-220; these read AHIDHGKS, DTPGH, and NKID.

It belongs to the TRAFAC class translation factor GTPase superfamily. Classic translation factor GTPase family. LepA subfamily.

It is found in the mitochondrion inner membrane. The enzyme catalyses GTP + H2O = GDP + phosphate + H(+). Promotes mitochondrial protein synthesis. May act as a fidelity factor of the translation reaction, by catalyzing a one-codon backward translocation of tRNAs on improperly translocated ribosomes. Binds to mitochondrial ribosomes in a GTP-dependent manner. The polypeptide is Translation factor GUF1 homolog, mitochondrial (Phaeodactylum tricornutum (strain CCAP 1055/1)).